The sequence spans 233 residues: Antilisterial bacteriocin subtilosin biosynthesis protein AlbG (233 aa).

Transmembrane regions (helical) follow at residues 7 to 27 (FTLLLLLIGMAAYSFGWVQAV), 46 to 66 (GLLACTAALLMLPAFLYLHYV), 116 to 136 (TYVMAAVLCQVIIFGCMFEIV), 145 to 165 (TPPAFSMGLAMLLILYLLFCM), 176 to 198 (GSLFRKVFAGALAAAGIWWMLSF), and 203 to 220 (LLFLIILAAIQQIGSFIY).

It localises to the cell membrane. Involved in the production of the bacteriocin subtilosin. The sequence is that of Antilisterial bacteriocin subtilosin biosynthesis protein AlbG (albG) from Bacillus subtilis (strain 168).